The sequence spans 370 residues: Binary larvicide subunit BinA (370 aa).

A propeptide spanning residues 1–6 (MRNLDF) is cleaved from the precursor. The segment at 1–155 (MRNLDFIDSF…LISNKEQIYL (155 aa)) is beta-trefoil domain. Cys-31 and Cys-47 form a disulfide bridge. Residues 156 to 370 (TLPSLPENEQ…NTKIITDDQN (215 aa)) form a pore-forming domain region.

It belongs to the toxin_10 family. As to quaternary structure, forms a heterodimer with BinB. Post-translationally, processed by proteases in the mosquito gut, probably at both the N- and C-termini.

The protein resides in the spore. The protein localises to the perispore. Functionally, component of a binary toxin active against Culex and some Aedes mosquito larvae. The individual subunits are not toxic. BinAB binds to the gastric caecum and posterior midgut of C.quinquefasciatus larvae; this subunit alone binds the entire larval gut. Binary toxin internalization into host gut cells requires both proteins. Toxic to Aedes atropalpus mosquito larvae; mortality towards both C.quinquefasciatus and A.atropalpus is maximal by 48 hours. A.aegypti is not very susceptible to this toxin. The chain is Binary larvicide subunit BinA (binA) from Lysinibacillus sphaericus (Bacillus sphaericus).